We begin with the raw amino-acid sequence, 316 residues long: Annexin A13 (316 aa).

Gly-2 is lipidated: N-myristoyl glycine. Annexin repeat units lie at residues Phe-14–Asp-85, Arg-86–Gln-157, Asp-169–Arg-241, and Asp-245–His-316.

The protein belongs to the annexin family. In terms of assembly, monomer and homodimer. As to expression, detected in intestine, and at much lower levels also in kidney (at protein level).

It is found in the apical cell membrane. It localises to the cell membrane. The protein localises to the cytoplasmic vesicle. In terms of biological role, binds to membranes enriched in phosphatidylserine or phosphatidylglycerol in a calcium-dependent manner. Half-maximal membrane binding requires about 60 uM calcium. Does not bind to membranes that lack phospholipids with an acidic headgroup. Binds to membranes enriched in phosphatidylserine or phosphatidylglycerol in a calcium-dependent manner, but requires higher calcium levels for membrane binding than isoform A. Half-maximal membrane binding requires about 320 uM calcium. May play a role in vesicular traffic to the apical plasma membrane. This chain is Annexin A13 (ANXA13), found in Canis lupus familiaris (Dog).